We begin with the raw amino-acid sequence, 62 residues long: U-myrmeciitoxin(01)-Mg3a (62 aa).

Residues 1–24 (MKTTVILLLAIAIIFAIMTTLTSA) form the signal peptide.

In terms of tissue distribution, expressed by the venom gland.

The protein localises to the secreted. In terms of biological role, may have antimicrobial properties, like most ant linear peptides. The sequence is that of U-myrmeciitoxin(01)-Mg3a from Myrmecia gulosa (Red bulldog ant).